We begin with the raw amino-acid sequence, 95 residues long: Small ribosomal subunit protein bS6 (95 aa).

This sequence belongs to the bacterial ribosomal protein bS6 family. Part of the 30S ribosomal subunit.

Binds together with bS18 to 16S ribosomal RNA. This chain is Small ribosomal subunit protein bS6 (rpsF), found in Bacillus subtilis (strain 168).